The primary structure comprises 497 residues: Serine/threonine-protein phosphatase 2A 56 kDa regulatory subunit beta isoform (497 aa).

Residues 1-19 (METKLPPASTPTSPSSPGL) show a composition bias toward low complexity. Disordered stretches follow at residues 1 to 55 (METK…YQSN) and 473 to 497 (QGTQ…GGQS). Residues serine 32, serine 35, serine 44, serine 46, serine 47, and serine 48 each carry the phosphoserine modification. Basic residues predominate over residues 34–45 (RSLRRARPRRSH).

This sequence belongs to the phosphatase 2A regulatory subunit B56 family. As to quaternary structure, component of the serine/threonine-protein phosphatase 2A complex (PP2A). This complex consists of a common heterodimeric core enzyme, composed of a 36 kDa catalytic subunit (subunit C) and a 65 kDa constant scaffold subunit (PR65 or subunit A), that associates with a variety of regulatory subunits. Proteins that associate with the core dimer include three families of regulatory subunits B (the R2/B/PR55/B55, R3/B''/PR72/PR130/PR59 and R5/B'/B56 families), the 48 kDa variable regulatory subunit, viral proteins, and cell signaling molecules. Interacts with SGO1. Interacts with AKT1. In terms of processing, ubiquitinated by CUL3-KLHL15 complex; this modification leads to proteasomal degradation. Widely expressed at the mRNA level, with highest levels in cerebellum and lung.

The protein resides in the cytoplasm. Its function is as follows. As the regulatory component of the serine/threonine-protein phosphatase 2A (PP2A) holoenzyme, modulates substrate specificity, subcellular localization, and responsiveness to phosphorylation. The phosphorylated form mediates the interaction between PP2A and AKT1, leading to AKT1 dephosphorylation. The protein is Serine/threonine-protein phosphatase 2A 56 kDa regulatory subunit beta isoform (Ppp2r5b) of Rattus norvegicus (Rat).